We begin with the raw amino-acid sequence, 338 residues long: Heat-inducible transcription repressor HrcA (338 aa).

This sequence belongs to the HrcA family.

In terms of biological role, negative regulator of class I heat shock genes (grpE-dnaK-dnaJ and groELS operons). Prevents heat-shock induction of these operons. The chain is Heat-inducible transcription repressor HrcA from Streptomyces albus G.